We begin with the raw amino-acid sequence, 383 residues long: MTEPAKREDSGLPEAVTAIRPEVAAFKPYAPGLSIDEIKERYGLSQVVKMASNENPLGTSPLVQQTLRTHADLAFRYVQSGNPRLVSAIARSFGVAAESVVTGNGSDEVIDLIIRVKARPGKHNIVAFNPCFSMYELQTRFCGVEFRQVPLRADFSFDYDAFVGAADADTAVAFITTPDNPSGYCPPVEEIIDLARRLPSSCLLVVDEAYMDFADDPAAHSVLPHLTEFPNVAVLRTFSKSYGLAGLRLGFGVMHPALADYVKRVRLPFSINILAEYAGIAALQDTTFHAQTLRVTREGRTYLTGALTEAGCTVYPSAANFIMFALPENCPHDARAVFEALLRRGIIIRPLSSYNLPQCLRVSIGNRHENELFIAQFKELLRG.

Lys240 is subject to N6-(pyridoxal phosphate)lysine.

Belongs to the class-II pyridoxal-phosphate-dependent aminotransferase family. Histidinol-phosphate aminotransferase subfamily. As to quaternary structure, homodimer. The cofactor is pyridoxal 5'-phosphate.

It carries out the reaction L-histidinol phosphate + 2-oxoglutarate = 3-(imidazol-4-yl)-2-oxopropyl phosphate + L-glutamate. It functions in the pathway amino-acid biosynthesis; L-histidine biosynthesis; L-histidine from 5-phospho-alpha-D-ribose 1-diphosphate: step 7/9. The polypeptide is Histidinol-phosphate aminotransferase (Oleidesulfovibrio alaskensis (strain ATCC BAA-1058 / DSM 17464 / G20) (Desulfovibrio alaskensis)).